We begin with the raw amino-acid sequence, 793 residues long: Spindle and centriole-associated protein 1 (793 aa).

Residues 1-29 (MSYLRASRTSSNLSLAKKPSKTRKKLQAR) form a disordered region. The span at 18 to 27 (KPSKTRKKLQ) shows a compositional bias: basic residues. Positions 312–405 (SLGLLNSMIM…LTAEILSLKE (94 aa)) form a coiled coil. Positions 519–542 (KTVGNLSSHSAVPKRAANRLPSPP) are disordered. Residues 622–712 (LQNEDLVSQM…LLKLIEQQKQ (91 aa)) adopt a coiled-coil conformation. Residues 718–739 (PTLSPITPQGRRTGSSLDTTPL) show a composition bias toward polar residues. The tract at residues 718 to 783 (PTLSPITPQG…RSQAANDRGE (66 aa)) is disordered. Low complexity predominate over residues 740–753 (SSCSTSGRRSSGAS). Positions 754-778 (NKSESISTSVGSLRSASTGRRSQAA) are enriched in polar residues.

It is found in the cytoplasm. It localises to the cytoskeleton. Its subcellular location is the microtubule organizing center. The protein localises to the centrosome. The protein resides in the centriole. It is found in the spindle. Its function is as follows. Regulator required for centriole duplication. The chain is Spindle and centriole-associated protein 1 (spice1) from Xenopus laevis (African clawed frog).